We begin with the raw amino-acid sequence, 320 residues long: HPr kinase/phosphorylase (320 aa).

Active-site residues include His141 and Lys162. 156 to 163 (GHSGLGKS) is a binding site for ATP. Residue Ser163 coordinates Mg(2+). The active-site Proton acceptor; for phosphorylation activity. Proton donor; for dephosphorylation activity is the Asp180. Positions 204-213 (LEVRGLGILN) are important for the catalytic mechanism of both phosphorylation and dephosphorylation. Glu205 serves as a coordination point for Mg(2+). Arg248 is an active-site residue. The interval 269 to 274 (PVAVGR) is important for the catalytic mechanism of dephosphorylation.

It belongs to the HPrK/P family. As to quaternary structure, homohexamer. The cofactor is Mg(2+).

The enzyme catalyses [HPr protein]-L-serine + ATP = [HPr protein]-O-phospho-L-serine + ADP + H(+). The catalysed reaction is [HPr protein]-O-phospho-L-serine + phosphate + H(+) = [HPr protein]-L-serine + diphosphate. Its function is as follows. Catalyzes the ATP- as well as the pyrophosphate-dependent phosphorylation of a specific serine residue in HPr, a phosphocarrier protein of the phosphoenolpyruvate-dependent sugar phosphotransferase system (PTS). HprK/P also catalyzes the pyrophosphate-producing, inorganic phosphate-dependent dephosphorylation (phosphorolysis) of seryl-phosphorylated HPr (P-Ser-HPr). This Neisseria meningitidis serogroup B (strain ATCC BAA-335 / MC58) protein is HPr kinase/phosphorylase.